The sequence spans 371 residues: Neuropeptide S receptor (371 aa).

Residues 1–21 (MPANFTEGSFDSSGTGQTLDS) show a composition bias toward polar residues. The segment at 1–22 (MPANFTEGSFDSSGTGQTLDSS) is disordered. Residues 1 to 52 (MPANFTEGSFDSSGTGQTLDSSPVACTETVTFTEVVEGKEWGSFYYSFKTEQ) are Extracellular-facing. A glycan (N-linked (GlcNAc...) asparagine) is linked at asparagine 4. A helical membrane pass occupies residues 53 to 73 (LITLWVLFVFTIVGNSVVLFS). The Cytoplasmic segment spans residues 74–82 (TWRRKKKSR). A helical transmembrane segment spans residues 83–103 (MTFFVTQLAITDSFTGLVNIL). The Extracellular portion of the chain corresponds to 104-123 (TDINWRFTGDFTAPDLVCRV). A disulfide bridge links cysteine 121 with cysteine 197. A helical membrane pass occupies residues 124-144 (VRYLQVVLLYASTYVLVSLSI). The Cytoplasmic segment spans residues 145 to 164 (DRYHAIVYPMKFLQGEKQAR). Residues 165 to 185 (VLIVIAWSLSFLFSIPTLIIF) traverse the membrane as a helical segment. The Extracellular segment spans residues 186–212 (GKRTLSNGEVQCWALWPDDSYWTPYMT). Residues 213–233 (IVAFLVYFIPLTIISIMYGIV) traverse the membrane as a helical segment. Residues 234–275 (IRTIWIKSKTYETVISNCSDGKLCSSYNRGLISKAKIKAIKY) lie on the Cytoplasmic side of the membrane. The helical transmembrane segment at 276–296 (SIIIILAFICCWSPYFLFDIL) threads the bilayer. The Extracellular portion of the chain corresponds to 297–312 (DNFNLLPDTQERFYAS). Residues 313 to 333 (VIIQNLPALNSAINPLIYCVF) form a helical membrane-spanning segment. Residues 334–371 (SSSISFPCREQRSQDSRMTFRERTERHEMQILSKPEFI) lie on the Cytoplasmic side of the membrane.

This sequence belongs to the G-protein coupled receptor 1 family. Vasopressin/oxytocin receptor subfamily. Isoform 4 is ubiquitous; it is detected in glandular epithelia of bronchus, stomach, small intestine, colon, uterus, esophagus, spleen, kidney, pancreas, prostate and breast. Isoform 1 is detected in uterus, colon and prostate, and in the smooth muscle cell layer in bronchial and arterial walls (at protein level). Isoform 1 is predominantly expressed in smooth muscle. Isoform 4 is predominantly expressed in epithelial cells. In bronchial biopsies, it is expressed in smooth muscle cells of asthma patients, but not in control patients; whereas in epithelial cells, its expression is consistently stronger in asthma patients.

It is found in the cell membrane. Its subcellular location is the cytoplasm. Functionally, G-protein coupled receptor for neuropeptide S (NPS). Promotes mobilization of intracellular Ca(2+) stores. Inhibits cell growth in response to NPS binding. Involved in pathogenesis of asthma and other IgE-mediated diseases. This Homo sapiens (Human) protein is Neuropeptide S receptor (NPSR1).